A 511-amino-acid polypeptide reads, in one-letter code: Lysine--tRNA ligase (511 aa).

Positions 403 and 410 each coordinate Mg(2+).

Belongs to the class-II aminoacyl-tRNA synthetase family. As to quaternary structure, homodimer. It depends on Mg(2+) as a cofactor.

It is found in the cytoplasm. The enzyme catalyses tRNA(Lys) + L-lysine + ATP = L-lysyl-tRNA(Lys) + AMP + diphosphate. The protein is Lysine--tRNA ligase of Onion yellows phytoplasma (strain OY-M).